The following is a 190-amino-acid chain: Elongation factor P (190 aa).

Belongs to the elongation factor P family.

Its subcellular location is the cytoplasm. The protein operates within protein biosynthesis; polypeptide chain elongation. In terms of biological role, involved in peptide bond synthesis. Stimulates efficient translation and peptide-bond synthesis on native or reconstituted 70S ribosomes in vitro. Probably functions indirectly by altering the affinity of the ribosome for aminoacyl-tRNA, thus increasing their reactivity as acceptors for peptidyl transferase. This Mycoplasma genitalium (strain ATCC 33530 / DSM 19775 / NCTC 10195 / G37) (Mycoplasmoides genitalium) protein is Elongation factor P (efp).